A 278-amino-acid chain; its full sequence is UPF0276 protein Ssed_2857 (278 aa).

It belongs to the UPF0276 family.

This Shewanella sediminis (strain HAW-EB3) protein is UPF0276 protein Ssed_2857.